The chain runs to 426 residues: Nucleolar protein 12 (426 aa).

Positions 26-128 (QSSGPVDTLE…SKRASRPDMK (103 aa)) are disordered. Residues 87 to 105 (LEEKYMQQVLKEDSDHESE) show a composition bias toward basic and acidic residues. RRM domains follow at residues 137 to 251 (RTVF…SVAH) and 259 to 339 (RSVF…RCRN). A compositionally biased stretch (basic residues) spans 401–415 (KARSKTGRVTKRSQA). The tract at residues 401 to 426 (KARSKTGRVTKRSQAFKKAEANKKQK) is disordered. The segment covering 417–426 (KKAEANKKQK) has biased composition (basic and acidic residues).

The protein belongs to the RRM RBM34 family.

The protein resides in the nucleus. The protein localises to the nucleolus. Its function is as follows. Involved in pre-25S rRNA processing. The polypeptide is Nucleolar protein 12 (NOP12) (Eremothecium gossypii (strain ATCC 10895 / CBS 109.51 / FGSC 9923 / NRRL Y-1056) (Yeast)).